Here is a 205-residue protein sequence, read N- to C-terminus: ATP phosphoribosyltransferase (205 aa).

It belongs to the ATP phosphoribosyltransferase family. Short subfamily. In terms of assembly, heteromultimer composed of HisG and HisZ subunits.

The protein localises to the cytoplasm. It carries out the reaction 1-(5-phospho-beta-D-ribosyl)-ATP + diphosphate = 5-phospho-alpha-D-ribose 1-diphosphate + ATP. The protein operates within amino-acid biosynthesis; L-histidine biosynthesis; L-histidine from 5-phospho-alpha-D-ribose 1-diphosphate: step 1/9. Its function is as follows. Catalyzes the condensation of ATP and 5-phosphoribose 1-diphosphate to form N'-(5'-phosphoribosyl)-ATP (PR-ATP). Has a crucial role in the pathway because the rate of histidine biosynthesis seems to be controlled primarily by regulation of HisG enzymatic activity. This is ATP phosphoribosyltransferase from Staphylococcus saprophyticus subsp. saprophyticus (strain ATCC 15305 / DSM 20229 / NCIMB 8711 / NCTC 7292 / S-41).